Here is a 131-residue protein sequence, read N- to C-terminus: Small ribosomal subunit protein uS8 (131 aa).

Belongs to the universal ribosomal protein uS8 family. Part of the 30S ribosomal subunit. Contacts proteins S5 and S12.

In terms of biological role, one of the primary rRNA binding proteins, it binds directly to 16S rRNA central domain where it helps coordinate assembly of the platform of the 30S subunit. The polypeptide is Small ribosomal subunit protein uS8 (Malacoplasma penetrans (strain HF-2) (Mycoplasma penetrans)).